Reading from the N-terminus, the 715-residue chain is Protein psiH (715 aa).

A signal peptide spans 1–20 (MNYLKPTIFLILCLVTFVYS). At 21–651 (QPSTLTIQGT…ICKTGAVVST (631 aa)) the chain is on the extracellular side. The PA14 domain occupies 115–256 (NYDSKKQVYV…YDYCGVCSGD (142 aa)). Asn-149, Asn-377, Asn-528, and Asn-622 each carry an N-linked (GlcNAc...) asparagine glycan. Residues 652 to 672 (AVIAGVTVAGAVALGVFIYGG) form a helical membrane-spanning segment. Topologically, residues 673 to 715 (KRGYDYWKESRNVQFSGSNSNPLYEQNPNGSGVNPLYNDNSAL) are cytoplasmic. The interval 690–715 (SNSNPLYEQNPNGSGVNPLYNDNSAL) is disordered.

This sequence belongs to the prespore-cell-inducing factor family.

Its subcellular location is the membrane. The chain is Protein psiH (psiH) from Dictyostelium discoideum (Social amoeba).